The chain runs to 97 residues: Secreted Ly-6/uPAR domain-containing protein 2 (97 aa).

Residues 1-22 form the signal peptide; the sequence is MQFHTGLLLAAVLSLQLAAAQA. The UPAR/Ly6 domain maps to 23–95; sequence LWCHQCTGFG…IACCQTSLCN (73 aa). Intrachain disulfides connect cysteine 25/cysteine 47, cysteine 28/cysteine 34, cysteine 40/cysteine 68, cysteine 72/cysteine 88, and cysteine 89/cysteine 94.

Interacts with CHRNA3, CHRNA4, CHRNA5, CHRNA7, CHRNB2 and CHRNB4. Interacts with CHRM1 and CHRM3 probably in an allosteric manner.

It is found in the secreted. Functionally, binds and may modulate the functional properties of nicotinic and muscarinic acetylcholine receptors. May regulate keratinocytes proliferation, differentiation and apoptosis. In vitro moderately inhibits ACh-evoked currents of alpha-3:beta-2-containing nAChRs, strongly these of alpha-4:beta-2-containing nAChRs, modulates alpha-7-containing nAChRs, and inhibits nicotine-induced signaling probably implicating alpha-3:beta-4-containing nAChRs. Proposed to act on alpha-3:beta-2 and alpha-7 nAChRs in an orthosteric, and on mAChRs, such as CHRM1 and CHRM3, in an allosteric manner. In Macaca mulatta (Rhesus macaque), this protein is Secreted Ly-6/uPAR domain-containing protein 2.